The chain runs to 140 residues: Ribonuclease P protein component (140 aa).

The protein belongs to the RnpA family. As to quaternary structure, consists of a catalytic RNA component (M1 or rnpB) and a protein subunit.

The catalysed reaction is Endonucleolytic cleavage of RNA, removing 5'-extranucleotides from tRNA precursor.. In terms of biological role, RNaseP catalyzes the removal of the 5'-leader sequence from pre-tRNA to produce the mature 5'-terminus. It can also cleave other RNA substrates such as 4.5S RNA. The protein component plays an auxiliary but essential role in vivo by binding to the 5'-leader sequence and broadening the substrate specificity of the ribozyme. In Nostoc sp. (strain PCC 7120 / SAG 25.82 / UTEX 2576), this protein is Ribonuclease P protein component.